The primary structure comprises 424 residues: Geranylgeranyl pyrophosphate synthase D (424 aa).

Residues 42-73 (PSATWPSVPKVHKRNRSTSLSDQQTAKKAHAN) form a disordered region. The span at 58 to 67 (STSLSDQQTA) shows a compositional bias: polar residues. Positions 147, 150, and 179 each coordinate isopentenyl diphosphate. 2 residues coordinate Mg(2+): D186 and D190. R195 lines the dimethylallyl diphosphate pocket. Residue R196 coordinates isopentenyl diphosphate. Dimethylallyl diphosphate-binding residues include K274, T275, Q311, K328, and K338.

The protein belongs to the FPP/GGPP synthase family. Mg(2+) is required as a cofactor.

The protein resides in the cytoplasm. It carries out the reaction isopentenyl diphosphate + dimethylallyl diphosphate = (2E)-geranyl diphosphate + diphosphate. The catalysed reaction is isopentenyl diphosphate + (2E)-geranyl diphosphate = (2E,6E)-farnesyl diphosphate + diphosphate. It catalyses the reaction isopentenyl diphosphate + (2E,6E)-farnesyl diphosphate = (2E,6E,10E)-geranylgeranyl diphosphate + diphosphate. It participates in isoprenoid biosynthesis; farnesyl diphosphate biosynthesis; farnesyl diphosphate from geranyl diphosphate and isopentenyl diphosphate: step 1/1. It functions in the pathway isoprenoid biosynthesis; geranyl diphosphate biosynthesis; geranyl diphosphate from dimethylallyl diphosphate and isopentenyl diphosphate: step 1/1. Its pathway is isoprenoid biosynthesis; geranylgeranyl diphosphate biosynthesis; geranylgeranyl diphosphate from farnesyl diphosphate and isopentenyl diphosphate: step 1/1. Catalyzes the trans-addition of the 3 molecules of isopentenyl diphosphate (IPP) onto dimethylallyl diphosphate (DMAPP) to form geranylgeranyl pyrophosphate (GGDP). The chain is Geranylgeranyl pyrophosphate synthase D (GGS-D) from Phomopsis amygdali (Fusicoccum amygdali).